The sequence spans 230 residues: Probable caffeoyl-CoA O-methyltransferase 1 (230 aa).

S-adenosyl-L-methionine is bound by residues Thr52, Asp74, 76-77 (GV), Ser82, Asp100, Ala129, Asp151, Asp153, and Tyr160. Residue Asp151 participates in a divalent metal cation binding. Asp177 and Asn178 together coordinate a divalent metal cation.

Belongs to the class I-like SAM-binding methyltransferase superfamily. Cation-dependent O-methyltransferase family. CCoAMT subfamily.

It catalyses the reaction (E)-caffeoyl-CoA + S-adenosyl-L-methionine = (E)-feruloyl-CoA + S-adenosyl-L-homocysteine + H(+). The sequence is that of Probable caffeoyl-CoA O-methyltransferase 1 (omt5) from Dictyostelium discoideum (Social amoeba).